A 392-amino-acid polypeptide reads, in one-letter code: LL-diaminopimelate aminotransferase (392 aa).

2 residues coordinate substrate: Tyr13 and Gly38. Pyridoxal 5'-phosphate-binding positions include Tyr67, 102–103 (SK), Tyr127, Asn177, Tyr208, and 236–238 (SCS). Substrate is bound by residues Lys103, Tyr127, and Asn177. Lys239 is subject to N6-(pyridoxal phosphate)lysine. Residue Arg247 coordinates pyridoxal 5'-phosphate. A substrate-binding site is contributed by Arg366.

It belongs to the class-I pyridoxal-phosphate-dependent aminotransferase family. LL-diaminopimelate aminotransferase subfamily. In terms of assembly, homodimer. Pyridoxal 5'-phosphate is required as a cofactor.

It carries out the reaction (2S,6S)-2,6-diaminopimelate + 2-oxoglutarate = (S)-2,3,4,5-tetrahydrodipicolinate + L-glutamate + H2O + H(+). It functions in the pathway amino-acid biosynthesis; L-lysine biosynthesis via DAP pathway; LL-2,6-diaminopimelate from (S)-tetrahydrodipicolinate (aminotransferase route): step 1/1. In terms of biological role, involved in the synthesis of meso-diaminopimelate (m-DAP or DL-DAP), required for both lysine and peptidoglycan biosynthesis. Catalyzes the direct conversion of tetrahydrodipicolinate to LL-diaminopimelate. Can also use m-DAP instead of LL-DAP as the amino-group donor. This chain is LL-diaminopimelate aminotransferase, found in Gloeobacter violaceus (strain ATCC 29082 / PCC 7421).